We begin with the raw amino-acid sequence, 192 residues long: Photosystem I assembly protein Ycf4 (192 aa).

2 helical membrane-spanning segments follow: residues 30-52 and 72-94; these read YFWA…SSYL and IAIG…AIAW.

Belongs to the Ycf4 family.

It localises to the cellular thylakoid membrane. Functionally, seems to be required for the assembly of the photosystem I complex. This chain is Photosystem I assembly protein Ycf4, found in Thermosynechococcus vestitus (strain NIES-2133 / IAM M-273 / BP-1).